The chain runs to 211 residues: MGKIIFVSGIDTDIGKTIATGFYAKRLMQQGFSVITQKMIQTGCQHISADIIKHRQLQGIELTAEDLNGITCPYLFRYPCSPHLAAEMENNPILPSKIAQASALLAQKYDYVLLEGAGGLAVPYNSQQTTLDYIVEQQLPLILVTSAKLGSINHTLLSLIVCQQHKIEMEAVIYNTYPLEDEKIAKSTQLYLQQYIKQHFPNTEFLVMDRQ.

Position 13–18 (Asp-13–Ile-18) interacts with ATP. Thr-17 contacts Mg(2+). Residue Lys-38 is part of the active site. Thr-42 contributes to the substrate binding site. ATP is bound by residues Asp-50, Glu-115–Gly-118, and Asn-175–Thr-176. Mg(2+)-binding residues include Asp-50 and Glu-115.

It belongs to the dethiobiotin synthetase family. As to quaternary structure, homodimer. It depends on Mg(2+) as a cofactor.

The protein localises to the cytoplasm. It carries out the reaction (7R,8S)-7,8-diammoniononanoate + CO2 + ATP = (4R,5S)-dethiobiotin + ADP + phosphate + 3 H(+). It functions in the pathway cofactor biosynthesis; biotin biosynthesis; biotin from 7,8-diaminononanoate: step 1/2. Catalyzes a mechanistically unusual reaction, the ATP-dependent insertion of CO2 between the N7 and N8 nitrogen atoms of 7,8-diaminopelargonic acid (DAPA, also called 7,8-diammoniononanoate) to form a ureido ring. This Haemophilus ducreyi (strain 35000HP / ATCC 700724) protein is ATP-dependent dethiobiotin synthetase BioD 2.